Here is a 100-residue protein sequence, read N- to C-terminus: Urease subunit gamma (100 aa).

This sequence belongs to the urease gamma subunit family. In terms of assembly, heterotrimer of UreA (gamma), UreB (beta) and UreC (alpha) subunits. Three heterotrimers associate to form the active enzyme. Although not discussed in the published references, Met-1 is represented in the submitted PDB entries as being modified by either a formyl, a carboxyl, or an acetyl group. The N-terminal is probably N-(dihydroxymethyl)methionine, the hydrated form of N-formylmethionine.

It localises to the cytoplasm. It carries out the reaction urea + 2 H2O + H(+) = hydrogencarbonate + 2 NH4(+). The protein operates within nitrogen metabolism; urea degradation; CO(2) and NH(3) from urea (urease route): step 1/1. The protein is Urease subunit gamma of Sporosarcina pasteurii (Bacillus pasteurii).